We begin with the raw amino-acid sequence, 402 residues long: uncharacterized protein (402 aa).

Residues 1 to 44 form the signal peptide; that stretch reads MLEKNLLPEILLAIHMPLNKGLTRVKAIVIIIVVIIAVIAGVVG. The tract at residues 53-79 is disordered; that stretch reads NSVTTSSSSTTTSSSLSSTSISSSTTN.

The protein belongs to the bacterial solute-binding protein 1 family. WtpA subfamily.

This is an uncharacterized protein from Saccharolobus solfataricus (strain ATCC 35092 / DSM 1617 / JCM 11322 / P2) (Sulfolobus solfataricus).